A 228-amino-acid chain; its full sequence is Cytidylate kinase (228 aa).

Gly10–Thr18 provides a ligand contact to ATP.

Belongs to the cytidylate kinase family. Type 1 subfamily.

The protein resides in the cytoplasm. The catalysed reaction is CMP + ATP = CDP + ADP. It catalyses the reaction dCMP + ATP = dCDP + ADP. This is Cytidylate kinase from Acinetobacter baumannii (strain SDF).